A 317-amino-acid chain; its full sequence is Beta-ketoacyl-[acyl-carrier-protein] synthase III (317 aa).

Catalysis depends on residues Cys112 and His244. The ACP-binding stretch occupies residues 245 to 249; that stretch reads QANLR. The active site involves Asn274.

Belongs to the thiolase-like superfamily. FabH family. In terms of assembly, homodimer.

The protein localises to the cytoplasm. The catalysed reaction is malonyl-[ACP] + acetyl-CoA + H(+) = 3-oxobutanoyl-[ACP] + CO2 + CoA. The protein operates within lipid metabolism; fatty acid biosynthesis. In terms of biological role, catalyzes the condensation reaction of fatty acid synthesis by the addition to an acyl acceptor of two carbons from malonyl-ACP. Catalyzes the first condensation reaction which initiates fatty acid synthesis and may therefore play a role in governing the total rate of fatty acid production. Possesses both acetoacetyl-ACP synthase and acetyl transacylase activities. Its substrate specificity determines the biosynthesis of branched-chain and/or straight-chain of fatty acids. This is Beta-ketoacyl-[acyl-carrier-protein] synthase III from Salmonella arizonae (strain ATCC BAA-731 / CDC346-86 / RSK2980).